Reading from the N-terminus, the 439-residue chain is D-inositol 3-phosphate glycosyltransferase (439 aa).

Histidine 21 is a 1D-myo-inositol 3-phosphate binding site. Residues 27–28 and glycine 35 each bind UDP-N-acetyl-alpha-D-glucosamine; that span reads QP. Residues 32 to 37, lysine 90, tyrosine 123, threonine 147, and arginine 167 contribute to the 1D-myo-inositol 3-phosphate site; that span reads DAGGMN. UDP-N-acetyl-alpha-D-glucosamine-binding residues include arginine 241, lysine 246, and glutamine 299. The Mg(2+) site is built by tyrosine 308, arginine 309, and alanine 311. Residues glutamate 321 and glutamate 329 each contribute to the UDP-N-acetyl-alpha-D-glucosamine site. Mg(2+) is bound at residue threonine 335.

It belongs to the glycosyltransferase group 1 family. MshA subfamily. As to quaternary structure, homodimer.

It catalyses the reaction 1D-myo-inositol 3-phosphate + UDP-N-acetyl-alpha-D-glucosamine = 1D-myo-inositol 2-acetamido-2-deoxy-alpha-D-glucopyranoside 3-phosphate + UDP + H(+). Functionally, catalyzes the transfer of a N-acetyl-glucosamine moiety to 1D-myo-inositol 3-phosphate to produce 1D-myo-inositol 2-acetamido-2-deoxy-glucopyranoside 3-phosphate in the mycothiol biosynthesis pathway. In Mycobacterium sp. (strain KMS), this protein is D-inositol 3-phosphate glycosyltransferase.